The chain runs to 561 residues: Transmembrane protein 209 (561 aa).

Ser-9 and Ser-11 each carry phosphoserine. A helical membrane pass occupies residues 28–48 (VVLAWGLLNVSMAGMIYTEMT). A glycan (N-linked (GlcNAc...) asparagine) is linked at Asn-57. The helical transmembrane segment at 60–80 (YWPLWYIELALASLFSLNALF) threads the bilayer. Ser-98 carries the phosphoserine modification. Disordered stretches follow at residues 119 to 157 (DLAATQIPPAPPSPSIQGQSVLSYSPSRSPSTSPKFTTS) and 195 to 234 (FSPSPPSPYPTTVGPVESSGLRSRYRSSPTVYNSPTDKED). The segment covering 133–157 (SIQGQSVLSYSPSRSPSTSPKFTTS) has biased composition (low complexity). Ser-201, Ser-222, and Ser-248 each carry phosphoserine. Residues 220-229 (RSSPTVYNSP) show a composition bias toward polar residues. The segment at 250–271 (EEKQHRVKLGSPDSTSPSSSPT) is disordered. Over residues 260 to 271 (SPDSTSPSSSPT) the composition is skewed to low complexity. Asn-274 carries an N-linked (GlcNAc...) asparagine glycan. Position 278 is a phosphoserine (Ser-278).

In terms of assembly, interacts with NUP205. In terms of tissue distribution, expressed in the testis.

The protein localises to the membrane. It localises to the nucleus envelope. Its subcellular location is the golgi apparatus. It is found in the cytoplasm. Nuclear envelope protein which in association with NUP205, may be involved in nuclear transport of various nuclear proteins in addition to MYC. The sequence is that of Transmembrane protein 209 (TMEM209) from Homo sapiens (Human).